The primary structure comprises 66 residues: Defensin-B1 (66 aa).

Positions 1 to 23 (MNAHVLLLCTILFLLVHTPPVLG) are cleaved as a signal peptide. Disulfide bonds link Cys29-Cys56, Cys36-Cys50, and Cys40-Cys57. Positions 61-66 (VLMEDG) are excised as a propeptide.

Belongs to the beta-defensin family. As to expression, expressed at low levels in kidney, lung, and spleen.

The protein resides in the secreted. Has bactericidal activity. May act as a ligand for C-C chemokine receptor CCR6. Positively regulates the sperm motility and bactericidal activity in a CCR6-dependent manner. Binds to CCR6 and triggers Ca2+ mobilization in the sperm which is important for its motility. The polypeptide is Defensin-B1 (Ornithorhynchus anatinus (Duckbill platypus)).